We begin with the raw amino-acid sequence, 369 residues long: MPPMLWLLLNFAAPALGFYFSISCPSGKQCQQALLSGNDILLYCNSSGAHWYYLFTQGKKGRLASLTNISNMEIMPEGSLLIKDPSPSQTGLYHCWNKNGRQVVQYEIDFQDISTLHVTHKDLGQRPLQNETLPLGSKELIFTRWEPWQDCNRCKEPGERKRLGYCYIEEPLKEAMPCWLYLGEMLVWSSRLRPELQVEACHVRCTNNTQLRVDYVIFDNFRLDEETEFVWLDCPLGSMYRPVYWHANDTPLTWESQLSGRDFTTFLDPSTGGRQLQVFQPAIYKCFVQQELVAQFNPATSPETLEAQWRENDAQWREARKALPGRADSVLKGLKLVLLVGTVLVLLGALLKFIRPSPGKRSKQVLMVK.

Residues 1-17 (MPPMLWLLLNFAAPALG) form the signal peptide. The Extracellular segment spans residues 18–333 (FYFSISCPSG…PGRADSVLKG (316 aa)). 3 N-linked (GlcNAc...) asparagine glycosylation sites follow: Asn45, Asn68, and Asn130. A helical transmembrane segment spans residues 334–354 (LKLVLLVGTVLVLLGALLKFI). Residues 355–369 (RPSPGKRSKQVLMVK) lie on the Cytoplasmic side of the membrane.

It belongs to the FAM187 family.

The protein resides in the membrane. The chain is Protein FAM187B (FAM187B) from Macaca fascicularis (Crab-eating macaque).